Reading from the N-terminus, the 236-residue chain is 1-(5-phosphoribosyl)-5-[(5-phosphoribosylamino)methylideneamino] imidazole-4-carboxamide isomerase (236 aa).

The active-site Proton acceptor is aspartate 8. Aspartate 129 functions as the Proton donor in the catalytic mechanism.

Belongs to the HisA/HisF family.

The protein resides in the cytoplasm. It carries out the reaction 1-(5-phospho-beta-D-ribosyl)-5-[(5-phospho-beta-D-ribosylamino)methylideneamino]imidazole-4-carboxamide = 5-[(5-phospho-1-deoxy-D-ribulos-1-ylimino)methylamino]-1-(5-phospho-beta-D-ribosyl)imidazole-4-carboxamide. Its pathway is amino-acid biosynthesis; L-histidine biosynthesis; L-histidine from 5-phospho-alpha-D-ribose 1-diphosphate: step 4/9. This chain is 1-(5-phosphoribosyl)-5-[(5-phosphoribosylamino)methylideneamino] imidazole-4-carboxamide isomerase, found in Methanoregula boonei (strain DSM 21154 / JCM 14090 / 6A8).